The sequence spans 617 residues: Elongation factor 4 (617 aa).

Positions 17–198 constitute a tr-type G domain; that stretch reads AIIRNFCIIA…KIVRDLPAPV (182 aa). Residues 29–34 and 145–148 contribute to the GTP site; these read DHGKST and NKID.

Belongs to the TRAFAC class translation factor GTPase superfamily. Classic translation factor GTPase family. LepA subfamily.

The protein localises to the cell membrane. The enzyme catalyses GTP + H2O = GDP + phosphate + H(+). Required for accurate and efficient protein synthesis under certain stress conditions. May act as a fidelity factor of the translation reaction, by catalyzing a one-codon backward translocation of tRNAs on improperly translocated ribosomes. Back-translocation proceeds from a post-translocation (POST) complex to a pre-translocation (PRE) complex, thus giving elongation factor G a second chance to translocate the tRNAs correctly. Binds to ribosomes in a GTP-dependent manner. The sequence is that of Elongation factor 4 from Arthrobacter sp. (strain FB24).